The chain runs to 165 residues: PARP-type zinc finger-containing protein C13F5.07c (165 aa).

The segment at 8–100 (YRIEIAPNNR…KVVDAINEGH (93 aa)) adopts a PARP-type; degenerate zinc-finger fold. A compositionally biased stretch (basic and acidic residues) spans 100–114 (HVSESDERESRKLGE). The tract at residues 100-165 (HVSESDERES…TDGSEAYEDD (66 aa)) is disordered. Polar residues predominate over residues 117–128 (NVNSQKLKTSSP). Positions 131–141 (VVRKNKRHHTT) are enriched in basic residues. Residues 149 to 165 (SDLDAEFTDGSEAYEDD) are compositionally biased toward acidic residues.

It localises to the cytoplasm. Its subcellular location is the nucleus. This Schizosaccharomyces pombe (strain 972 / ATCC 24843) (Fission yeast) protein is PARP-type zinc finger-containing protein C13F5.07c.